Reading from the N-terminus, the 1225-residue chain is ABC transporter B family member 18 (1225 aa).

The next 6 membrane-spanning stretches (helical) occupy residues 23–43 (MALGLIGAVGDGFITPIIFFI), 70–90 (VALVYVACASWVICFIEGYCW), 146–168 (LPNFLMNTSAFVASYIVGFLLLW), 172–194 (IVGFPFIILLLIPGLMYGRALIR), 252–272 (GIAIGSNGITYAIWGFLTWYG), and 284–304 (GTVSSVIVCVTFGGTSLGQSL). An ABC transmembrane type-1 1 domain is found at 23–312 (MALGLIGAVG…SLSNLKYFSE (290 aa)). One can recognise an ABC transporter 1 domain in the interval 347–583 (VEFNHVKFTY…LDGQYTSLVR (237 aa)). ATP is bound at residue 382-389 (GGSGSGKS). N-linked (GlcNAc...) asparagine glycosylation occurs at asparagine 530. Transmembrane regions (helical) follow at residues 657–677 (ALYGCLGAALFGAVQPIYSYS) and 699–719 (IYVLLFVGLALFTFLSNISQH). The 289-residue stretch at 657 to 945 (ALYGCLGAAL…AGTMTKDLVK (289 aa)) folds into the ABC transmembrane type-1 2 domain. An N-linked (GlcNAc...) asparagine glycan is attached at asparagine 754. Transmembrane regions (helical) follow at residues 780–800 (LLVQTISAVSITCAIGLVISW), 804–824 (IVMMSVQPVIVVCFYTQRVLL), 880–900 (SWLAGIMLGTSQSLITCVSAL), and 919–939 (FLEIFLIFASTGRVIAEAGTM). Asparagine 960 and asparagine 1000 each carry an N-linked (GlcNAc...) asparagine glycan. An ABC transporter 2 domain is found at 980–1218 (ISFSNVDFAY…GPKGAYFSLV (239 aa)). 1015–1022 (GPSGSGKS) is a binding site for ATP. N-linked (GlcNAc...) asparagine glycosylation is present at asparagine 1201.

It belongs to the ABC transporter superfamily. ABCB family. Multidrug resistance exporter (TC 3.A.1.201) subfamily.

Its subcellular location is the membrane. The polypeptide is ABC transporter B family member 18 (ABCB18) (Arabidopsis thaliana (Mouse-ear cress)).